The primary structure comprises 494 residues: MTPTVNAKTVTRNVGWSVLSKTGTFGLKFVTVPILARILSPEEFGAVAVALTVVQFLAMIGGAGLTSALVIQQHEEMETVHSVFWANLAIALMMALGLFVFAEPLATLLGAPEAAYLLRIMSLLIPLQLGGDVAYSLLVRRMNFRKDAVWSMISESLGAVIAVLLALLGFGIWSLLAQLFVSALVRLSGLYAVSRYAPRFVFSLQRVLALSRFSFGMMGSEIANFITFQSPMVVISRYLGLSDAGAYSAANRFASIPNQVVLSAVMGVLFPTFGQMMHDRERRSQALMLSTQVTTVLLAPMMFGLWALAEPAMLVLFGSQWAYAWPVLGLLALSKGILTPCSTFIPYLKGVGQGAVLFWWALIRAVATTGAVAYGAIDGSLVEAMIWLCIVNAVTLVGYSWVVFRADSTPFLKGLFISSRPMIAALLMALVVRFLLEHFGAHVPNAVLQLIAGTAIGSVIYTVLILLTERSLLRRLLDMARARKPRAAPAGAAE.

13 consecutive transmembrane segments (helical) span residues 16 to 36 (WSVL…PILA), 44 to 64 (FGAV…GGAG), 82 to 102 (SVFW…FVFA), 105 to 125 (LATL…SLLI), 157 to 177 (LGAV…SLLA), 215 to 235 (FGMM…MVVI), 253 to 273 (FASI…FPTF), 297 to 317 (LLAP…LVLF), 321 to 341 (WAYA…LTPC), 343 to 363 (TFIP…WALI), 384 to 404 (AMIW…WVVF), 421 to 441 (PMIA…HFGA), and 447 to 467 (VLQL…LILL).

It belongs to the polysaccharide synthase family.

The protein resides in the cell membrane. It functions in the pathway glycan metabolism; exopolysaccharide biosynthesis. The sequence is that of Succinoglycan biosynthesis transport protein ExoT (exoT) from Rhizobium meliloti (strain 1021) (Ensifer meliloti).